Reading from the N-terminus, the 118-residue chain is Protein MGF 110-6L (118 aa).

An N-terminal signal peptide occupies residues 1–18 (MLVIFLGILGLLASQVSS). Residue Asn-96 is glycosylated (N-linked (GlcNAc...) asparagine; by host). Positions 115-118 (KDEL) match the Prevents secretion from ER motif.

This sequence belongs to the asfivirus MGF 110 family. N-glycosylated.

It localises to the host endoplasmic reticulum lumen. In terms of biological role, plays a role in virus cell tropism, and may be required for efficient virus replication in macrophages. The sequence is that of Protein MGF 110-6L from African swine fever virus (strain Badajoz 1971 Vero-adapted) (Ba71V).